Consider the following 1435-residue polypeptide: Guanine nucleotide exchange factor LTE1 (1435 aa).

The region spanning 25 to 157 (VSKPVNSADL…SCIINLKKNW (133 aa)) is the N-terminal Ras-GEF domain. The disordered stretch occupies residues 235–256 (KLQSSNSSKNQRSPSMLLFPDN). Over residues 237 to 249 (QSSNSSKNQRSPS) the composition is skewed to low complexity. At Ser-271 the chain carries Phosphoserine. Residues 338–365 (QSGTLQGTSTTSSLDNNSNSNSRSNTSS) form a disordered region. Ser-559 carries the phosphoserine modification. Basic and acidic residues predominate over residues 582-606 (KDNSSSRTDENGPQRLLFHETDKTN). The segment at 582–689 (KDNSSSRTDE…VRNIVNNTDS (108 aa)) is disordered. Residues 621 to 632 (SQSQKSMTSSPL) are compositionally biased toward polar residues. The segment covering 654–667 (SITYSYDSELSSSS) has biased composition (low complexity). Ser-689 bears the Phosphoserine mark. The residue at position 691 (Thr-691) is a Phosphothreonine. Positions 723–744 (EKNYDNKENQESEYESTKKLDN) are enriched in basic and acidic residues. Positions 723–747 (EKNYDNKENQESEYESTKKLDNSLD) are disordered. Residues Ser-808 and Ser-810 each carry the phosphoserine modification. A disordered region spans residues 851–871 (AQNSPLKQTQNPQREFPNGTS). Residues Ser-1028 and Ser-1109 each carry the phosphoserine modification. Residues 1194 to 1434 (DSLSVAQQMT…LTQEEINELS (241 aa)) form the Ras-GEF domain.

This sequence belongs to the LTE1 family. Interacts with CDC24, CDC42, KEL1, KEL2, RAS2 and TEM1. In terms of processing, phosphorylated by CDC28 in a cell cycle-dependent manner and in response to nocodazole. Dephosphorylion by CDC14 triggers LTE1 release from bud cortex during the exit of mitosis.

It is found in the cytoplasm. The protein resides in the bud. Functionally, GDP-GTP exchange factor for TEM1, a Ras-like protein, component of the mitotic exit network (MEN). Activation of TEM1 by LTE1 in the bud ultimately leads to activation of CDC15 followed by the release of CDC14 from the nucleolus, which then inactivates cyclin-dependent kinases (CDKs) activity by several mechanism. Required for TEM1 localization to the bud cortex during mitotic exit. Fine-tunes the timing of the mitotic exit and couples this event with cytokinesis. In terms of biological role, involved in proprotein-processing like proalpha factor-processing in the secretory pathway. The sequence is that of Guanine nucleotide exchange factor LTE1 (LTE1) from Saccharomyces cerevisiae (strain ATCC 204508 / S288c) (Baker's yeast).